The primary structure comprises 766 residues: Phospholipid phosphatase-related protein type 4 (766 aa).

S37 carries the post-translational modification Phosphoserine. 3 consecutive transmembrane segments (helical) span residues 68–88 (LPCF…SLYF), 120–140 (AIPF…TIMV), and 179–199 (FVGV…IIQL). Residues N215 and N220 are each glycosylated (N-linked (GlcNAc...) asparagine). A helical transmembrane segment spans residues 248–268 (SFPSQHATLAAFAAVYVSMYF). A glycan (N-linked (GlcNAc...) asparagine) is linked at N269. 2 consecutive transmembrane segments (helical) span residues 277–297 (KLLK…CGLT) and 309–329 (VYCG…YAVG). S347 carries the phosphoserine modification. N363 carries N-linked (GlcNAc...) asparagine glycosylation. Phosphoserine is present on S386. N-linked (GlcNAc...) asparagine glycosylation is present at N433. Position 439 is a phosphoserine (S439). Residues 454-494 (SKNESRKMSLQVMDTEPEGQSPPRSIEMRSSSEPSRVGVNG) form a disordered region. N456 carries an N-linked (GlcNAc...) asparagine glycan. S462 and S474 each carry phosphoserine. N-linked (GlcNAc...) asparagine glycans are attached at residues N515, N545, and N570. Phosphoserine is present on S608. Disordered stretches follow at residues 634 to 654 (PIIQ…KWKA), 672 to 701 (DSES…HHHH), and 742 to 766 (ERSN…AYKD). Residues 672–697 (DSESCESLKDSFGSGDRKRSNIDSNE) show a composition bias toward basic and acidic residues. Residues 743–752 (RSNSPENTRN) show a composition bias toward polar residues.

The protein belongs to the PA-phosphatase related phosphoesterase family. Post-translationally, O-glycosylated. Probably at Ser-347. Brain-specific, it is exclusively expressed in neurons (at protein level).

Its subcellular location is the postsynaptic density membrane. Postsynaptic density membrane protein that indirectly regulates glutamatergic synaptic transmission through lysophosphatidic acid (LPA)-mediated signaling pathways. Binds lysophosphatidic acid (LPA) and mediates its internalization into cells. Could act as receptor or a transporter of this lipid at the post-synaptic membrane. Modulates lysophosphatidic acid (LPA) activity in neuron axonal outgrowth during development by attenuating phospholipid-induced axon collapse. The protein is Phospholipid phosphatase-related protein type 4 of Mus musculus (Mouse).